Reading from the N-terminus, the 1379-residue chain is DNA-directed RNA polymerase subunit beta'' (1379 aa).

4 residues coordinate Zn(2+): C220, C293, C300, and C303.

It belongs to the RNA polymerase beta' chain family. RpoC2 subfamily. As to quaternary structure, in plastids the minimal PEP RNA polymerase catalytic core is composed of four subunits: alpha, beta, beta', and beta''. When a (nuclear-encoded) sigma factor is associated with the core the holoenzyme is formed, which can initiate transcription. The cofactor is Zn(2+).

The protein localises to the plastid. It localises to the chloroplast. It carries out the reaction RNA(n) + a ribonucleoside 5'-triphosphate = RNA(n+1) + diphosphate. Its function is as follows. DNA-dependent RNA polymerase catalyzes the transcription of DNA into RNA using the four ribonucleoside triphosphates as substrates. This is DNA-directed RNA polymerase subunit beta'' from Olimarabidopsis pumila (Dwarf rocket).